The sequence spans 403 residues: tRNA(Met) cytidine acetate ligase (403 aa).

ATP contacts are provided by residues 7–20 (IVEYNPFHNGHLYH), glycine 102, asparagine 168, and arginine 193.

It belongs to the TmcAL family.

It is found in the cytoplasm. The enzyme catalyses cytidine(34) in elongator tRNA(Met) + acetate + ATP = N(4)-acetylcytidine(34) in elongator tRNA(Met) + AMP + diphosphate. Catalyzes the formation of N(4)-acetylcytidine (ac(4)C) at the wobble position of elongator tRNA(Met), using acetate and ATP as substrates. First activates an acetate ion to form acetyladenylate (Ac-AMP) and then transfers the acetyl group to tRNA to form ac(4)C34. In Clostridium tetani (strain Massachusetts / E88), this protein is tRNA(Met) cytidine acetate ligase.